The chain runs to 351 residues: DNA polymerase IV (351 aa).

The region spanning 4–185 (IIHVDMDCFF…LPLAKIPGVG (182 aa)) is the UmuC domain. D8 and D103 together coordinate Mg(2+). The active site involves E104.

It belongs to the DNA polymerase type-Y family. Monomer. Mg(2+) serves as cofactor.

The protein resides in the cytoplasm. It catalyses the reaction DNA(n) + a 2'-deoxyribonucleoside 5'-triphosphate = DNA(n+1) + diphosphate. In terms of biological role, poorly processive, error-prone DNA polymerase involved in untargeted mutagenesis. Copies undamaged DNA at stalled replication forks, which arise in vivo from mismatched or misaligned primer ends. These misaligned primers can be extended by PolIV. Exhibits no 3'-5' exonuclease (proofreading) activity. May be involved in translesional synthesis, in conjunction with the beta clamp from PolIII. The sequence is that of DNA polymerase IV from Salmonella choleraesuis (strain SC-B67).